The primary structure comprises 631 residues: tRNA 5-methylaminomethyl-2-thiouridine biosynthesis bifunctional protein MnmC (631 aa).

Residues 1–243 are tRNA (mnm(5)s(2)U34)-methyltransferase; sequence MITDLRPPAM…KREMLTGRLP (243 aa). The FAD-dependent cmnm(5)s(2)U34 oxidoreductase stretch occupies residues 261–631; the sequence is IGAGIAGAAL…GRLYRNQLTV (371 aa).

It in the N-terminal section; belongs to the methyltransferase superfamily. tRNA (mnm(5)s(2)U34)-methyltransferase family. The protein in the C-terminal section; belongs to the DAO family. FAD serves as cofactor.

It is found in the cytoplasm. The catalysed reaction is 5-aminomethyl-2-thiouridine(34) in tRNA + S-adenosyl-L-methionine = 5-methylaminomethyl-2-thiouridine(34) in tRNA + S-adenosyl-L-homocysteine + H(+). Catalyzes the last two steps in the biosynthesis of 5-methylaminomethyl-2-thiouridine (mnm(5)s(2)U) at the wobble position (U34) in tRNA. Catalyzes the FAD-dependent demodification of cmnm(5)s(2)U34 to nm(5)s(2)U34, followed by the transfer of a methyl group from S-adenosyl-L-methionine to nm(5)s(2)U34, to form mnm(5)s(2)U34. This Marinobacter nauticus (strain ATCC 700491 / DSM 11845 / VT8) (Marinobacter aquaeolei) protein is tRNA 5-methylaminomethyl-2-thiouridine biosynthesis bifunctional protein MnmC.